We begin with the raw amino-acid sequence, 208 residues long: Pyridoxine/pyridoxamine 5'-phosphate oxidase (208 aa).

FMN is bound by residues 55-60, 70-71, Lys77, and Gln99; these read RMVLLK and YT. Residue Lys60 coordinates substrate. Residues Tyr117, Arg121, and Ser125 each coordinate substrate. Residues 134-135 and Trp180 contribute to the FMN site; that span reads QS. 186–188 lines the substrate pocket; the sequence is RIH. Residue Arg190 coordinates FMN.

The protein belongs to the pyridoxamine 5'-phosphate oxidase family. As to quaternary structure, homodimer. It depends on FMN as a cofactor.

The enzyme catalyses pyridoxamine 5'-phosphate + O2 + H2O = pyridoxal 5'-phosphate + H2O2 + NH4(+). The catalysed reaction is pyridoxine 5'-phosphate + O2 = pyridoxal 5'-phosphate + H2O2. The protein operates within cofactor metabolism; pyridoxal 5'-phosphate salvage; pyridoxal 5'-phosphate from pyridoxamine 5'-phosphate: step 1/1. It functions in the pathway cofactor metabolism; pyridoxal 5'-phosphate salvage; pyridoxal 5'-phosphate from pyridoxine 5'-phosphate: step 1/1. In terms of biological role, catalyzes the oxidation of either pyridoxine 5'-phosphate (PNP) or pyridoxamine 5'-phosphate (PMP) into pyridoxal 5'-phosphate (PLP). This Pelagibacter ubique (strain HTCC1062) protein is Pyridoxine/pyridoxamine 5'-phosphate oxidase.